The chain runs to 473 residues: 3-isopropylmalate dehydratase large subunit 2 (473 aa).

[4Fe-4S] cluster contacts are provided by C350, C410, and C413.

Belongs to the aconitase/IPM isomerase family. LeuC type 1 subfamily. Heterodimer of LeuC and LeuD. [4Fe-4S] cluster serves as cofactor.

It carries out the reaction (2R,3S)-3-isopropylmalate = (2S)-2-isopropylmalate. It functions in the pathway amino-acid biosynthesis; L-leucine biosynthesis; L-leucine from 3-methyl-2-oxobutanoate: step 2/4. Catalyzes the isomerization between 2-isopropylmalate and 3-isopropylmalate, via the formation of 2-isopropylmaleate. This is 3-isopropylmalate dehydratase large subunit 2 from Salmonella choleraesuis (strain SC-B67).